Consider the following 393-residue polypeptide: Digeranylgeranylglycerophospholipid reductase 2 (393 aa).

FAD is bound by residues Asp-33, Cys-44, Ala-45, Gly-47, Arg-100, Ala-124, Asp-280, Gly-292, and Ile-293.

This sequence belongs to the geranylgeranyl reductase family. DGGGPL reductase subfamily. The cofactor is FAD.

The enzyme catalyses a 2,3-bis-O-phytanyl-sn-glycerol 1-phospholipid + 8 A = a 2,3-bis-O-(geranylgeranyl)-sn-glycerol 1-phospholipid + 8 AH2. The catalysed reaction is 2,3-bis-O-(phytanyl)-sn-glycerol 1-phosphate + 8 A = 2,3-bis-O-(geranylgeranyl)-sn-glycerol 1-phosphate + 8 AH2. It catalyses the reaction CDP-2,3-bis-O-(geranylgeranyl)-sn-glycerol + 8 AH2 = CDP-2,3-bis-O-(phytanyl)-sn-glycerol + 8 A. It carries out the reaction archaetidylserine + 8 AH2 = 2,3-bis-O-phytanyl-sn-glycero-3-phospho-L-serine + 8 A. Its pathway is membrane lipid metabolism; glycerophospholipid metabolism. In terms of biological role, is involved in the reduction of 2,3-digeranylgeranylglycerophospholipids (unsaturated archaeols) into 2,3-diphytanylglycerophospholipids (saturated archaeols) in the biosynthesis of archaeal membrane lipids. Catalyzes the formation of archaetidic acid (2,3-di-O-phytanyl-sn-glyceryl phosphate) from 2,3-di-O-geranylgeranylglyceryl phosphate (DGGGP) via the hydrogenation of each double bond of the isoprenoid chains. Is also probably able to reduce double bonds of geranyl groups in CDP-2,3-bis-O-(geranylgeranyl)-sn-glycerol and archaetidylserine, thus acting at various stages in the biosynthesis of archaeal membrane lipids. The polypeptide is Digeranylgeranylglycerophospholipid reductase 2 (Methanosphaera stadtmanae (strain ATCC 43021 / DSM 3091 / JCM 11832 / MCB-3)).